A 274-amino-acid chain; its full sequence is Protein RecA (274 aa).

Residue 43-50 coordinates ATP; that stretch reads GPESSGKT.

Belongs to the RecA family.

The protein localises to the cytoplasm. Its function is as follows. Can catalyze the hydrolysis of ATP in the presence of single-stranded DNA, the ATP-dependent uptake of single-stranded DNA by duplex DNA, and the ATP-dependent hybridization of homologous single-stranded DNAs. It interacts with LexA causing its activation and leading to its autocatalytic cleavage. The chain is Protein RecA from Neisseria polysaccharea.